A 200-amino-acid chain; its full sequence is Cleavage and polyadenylation specificity factor subunit 5 (200 aa).

The Nudix hydrolase domain occupies 45 to 170 (LRKAVEGIII…LSLIAVSLYE (126 aa)). The tract at residues 70–72 (NYF) is interaction with RNA. Positions 77–98 (GKLKPGENEIDGLIRKLTKKLS) match the Nudix box motif.

Belongs to the Nudix hydrolase family. CPSF5 subfamily. In terms of assembly, homodimer (via N- and C-terminus); binds RNA as homodimer. Component of the cleavage factor Im (CFIm) complex.

It is found in the nucleus. The protein resides in the cytoplasm. Component of the cleavage factor Im (CFIm) complex that functions as an activator of the pre-mRNA 3'-end cleavage and polyadenylation processing required for the maturation of pre-mRNA into functional mRNAs. CFIm contributes to the recruitment of multiprotein complexes on specific sequences on the pre-mRNA 3'-end, so called cleavage and polyadenylation signals (pA signals). Most pre-mRNAs contain multiple pA signals, resulting in alternative cleavage and polyadenylation (APA) producing mRNAs with variable 3'-end formation. The CFIm complex acts as a key regulator of cleavage and polyadenylation site choice during APA through its binding to 5'-UGUA-3' elements localized in the 3'-untranslated region (UTR) for a huge number of pre-mRNAs. Binds to 5'-UGUA-3' elements localized upstream of pA signals that act as enhancers of pre-mRNA 3'-end processing. The homodimer mediates simultaneous sequence-specific recognition of two 5'-UGUA-3' elements within the pre-mRNA. Plays a role in somatic cell fate transitions and pluripotency by regulating widespread changes in gene expression through an APA-dependent function. Binds to chromatin. In Dictyostelium discoideum (Social amoeba), this protein is Cleavage and polyadenylation specificity factor subunit 5.